We begin with the raw amino-acid sequence, 215 residues long: MEKKMPKATAKRLPVYLRYLKMLGDSGVKRIKSREFSEMIQIPSATIRRDFSHVGELGRSGYGYDVPYLIEVFSNILNTQEEKRIALIGCGNLGKALLKNNFRRNENLNIVCAFDNDSALVGTTINGLLVHDMSELEAFVRQEGVTVAISTVPSHHAQKAIDKIVQAGVTAILNFAPDRVSVPANVSVQYIDLTTELQTLIYFNETFSLANSPKQ.

A DNA-binding region (H-T-H motif) is located at residues 15–54 (VYLRYLKMLGDSGVKRIKSREFSEMIQIPSATIRRDFSHV). Residue 89-94 (GCGNLG) participates in NAD(+) binding.

The protein belongs to the transcriptional regulatory Rex family. As to quaternary structure, homodimer.

The protein resides in the cytoplasm. Functionally, modulates transcription in response to changes in cellular NADH/NAD(+) redox state. The protein is Redox-sensing transcriptional repressor Rex 2 of Enterococcus faecalis (strain ATCC 700802 / V583).